We begin with the raw amino-acid sequence, 190 residues long: Small ribosomal subunit protein mS23 (190 aa).

A2 bears the N-acetylalanine mark. At K102 the chain carries N6-acetyllysine. Residues 139 to 190 are disordered; sequence RTQHGGSHVSRKSEHLSVRPQTALEENETQKEVPQDQHLEAPADQSKGLLPP. Over residues 166-179 the composition is skewed to basic and acidic residues; that stretch reads ETQKEVPQDQHLEA.

Belongs to the mitochondrion-specific ribosomal protein mS23 family. Component of the mitochondrial small ribosomal subunit (mt-SSU). Mature mammalian 55S mitochondrial ribosomes consist of a small (28S) and a large (39S) subunit. The 28S small subunit contains a 12S ribosomal RNA (12S mt-rRNA) and 30 different proteins. The 39S large subunit contains a 16S rRNA (16S mt-rRNA), a copy of mitochondrial valine transfer RNA (mt-tRNA(Val)), which plays an integral structural role, and 52 different proteins.

Its subcellular location is the mitochondrion. The polypeptide is Small ribosomal subunit protein mS23 (MRPS23) (Homo sapiens (Human)).